The chain runs to 67 residues: Light-harvesting protein B-870 alpha chain (67 aa).

Topologically, residues 1–12 (MWRIWRLFDPMR) are cytoplasmic. The chain crosses the membrane as a helical span at residues 13–33 (AMVAQAVFLLGLAVLIHLMLL). H29 is an a bacteriochlorophyll binding site. Residues 34-67 (GTNKYNWLDGAKKAPVATAVAPVPAEVTSLAQAK) lie on the Periplasmic side of the membrane.

It belongs to the antenna complex alpha subunit family. An alpha/beta heterodimer. The core complex is formed by different alpha and beta chains, binding bacteriochlorophyll molecules, and arranged most probably in tetrameric structures disposed around the reaction center. The non-pigmented gamma chains may constitute additional components.

It is found in the cell inner membrane. In terms of biological role, antenna complexes are light-harvesting systems, which transfer the excitation energy to the reaction centers. This Rubrivivax gelatinosus (strain NBRC 100245 / IL144) protein is Light-harvesting protein B-870 alpha chain (pufA).